The chain runs to 206 residues: 2,3-bisphosphoglycerate-dependent phosphoglycerate mutase (206 aa).

Substrate contacts are provided by residues Arg-9–Asn-16, Thr-22–Gly-23, Arg-61, Glu-88–Tyr-91, Lys-99, Arg-115–Arg-116, and Gly-159–Asn-160. The active-site Tele-phosphohistidine intermediate is the His-10. Glu-88 functions as the Proton donor/acceptor in the catalytic mechanism.

This sequence belongs to the phosphoglycerate mutase family. BPG-dependent PGAM subfamily. In terms of assembly, homodimer.

The catalysed reaction is (2R)-2-phosphoglycerate = (2R)-3-phosphoglycerate. It functions in the pathway carbohydrate degradation; glycolysis; pyruvate from D-glyceraldehyde 3-phosphate: step 3/5. Catalyzes the interconversion of 2-phosphoglycerate and 3-phosphoglycerate. This Bartonella tribocorum (strain CIP 105476 / IBS 506) protein is 2,3-bisphosphoglycerate-dependent phosphoglycerate mutase.